The sequence spans 473 residues: Putative sulfoquinovose importer (473 aa).

11 consecutive transmembrane segments (helical) span residues alanine 18–leucine 38, leucine 45–phenylalanine 65, proline 88–threonine 108, phenylalanine 110–tyrosine 130, glycine 160–phenylalanine 180, glycine 187–phenylalanine 207, leucine 239–isoleucine 259, tryptophan 276–valine 296, isoleucine 317–phenylalanine 337, isoleucine 380–proline 400, and leucine 415–tyrosine 435.

Belongs to the sodium:galactoside symporter (TC 2.A.2) family.

Its subcellular location is the cell inner membrane. Functionally, could be involved in sulfoquinovose import. The protein is Putative sulfoquinovose importer (yihO) of Salmonella typhimurium (strain LT2 / SGSC1412 / ATCC 700720).